The following is a 527-amino-acid chain: Glutamate--cysteine ligase (527 aa).

Belongs to the glutamate--cysteine ligase type 1 family. Type 1 subfamily.

The enzyme catalyses L-cysteine + L-glutamate + ATP = gamma-L-glutamyl-L-cysteine + ADP + phosphate + H(+). It participates in sulfur metabolism; glutathione biosynthesis; glutathione from L-cysteine and L-glutamate: step 1/2. The sequence is that of Glutamate--cysteine ligase from Pseudomonas aeruginosa (strain UCBPP-PA14).